The chain runs to 297 residues: MSAPTTNAAPRAKTGYADRFKGGVIMDVVNPEQARIAEAAGAVAVMALERVPADIRAQGGVSRMSDPDMIDGILEAVDIPVMAKARIGHFVEAQVLQSLGVHFIDESEVLTPADYANHIDKFAFEVPFVCGATNLGEALRRVNEGAAMIRSKGEAGTGDVSNAVTHMRTIRAEINRLTSMAEDELYVAAKELQAPYELVVHVAREGKLPVPLLTAGGIATPADAAMMMQLGADGVFVGSGIFKSGNPEQRARAIVAATQNYNDPDTIARVSRGLGEAMVGINVDDLPVSHRLAERGW.

Asp27 contributes to the D-ribose 5-phosphate binding site. Lys84 functions as the Schiff-base intermediate with D-ribose 5-phosphate in the catalytic mechanism. Gly156 provides a ligand contact to D-ribose 5-phosphate. Arg168 is a D-glyceraldehyde 3-phosphate binding site. Residues Gly217 and 238–239 (GS) each bind D-ribose 5-phosphate.

The protein belongs to the PdxS/SNZ family. In the presence of PdxT, forms a dodecamer of heterodimers.

It carries out the reaction aldehydo-D-ribose 5-phosphate + D-glyceraldehyde 3-phosphate + L-glutamine = pyridoxal 5'-phosphate + L-glutamate + phosphate + 3 H2O + H(+). It functions in the pathway cofactor biosynthesis; pyridoxal 5'-phosphate biosynthesis. Functionally, catalyzes the formation of pyridoxal 5'-phosphate from ribose 5-phosphate (RBP), glyceraldehyde 3-phosphate (G3P) and ammonia. The ammonia is provided by the PdxT subunit. Can also use ribulose 5-phosphate and dihydroxyacetone phosphate as substrates, resulting from enzyme-catalyzed isomerization of RBP and G3P, respectively. The polypeptide is Pyridoxal 5'-phosphate synthase subunit PdxS (Corynebacterium efficiens (strain DSM 44549 / YS-314 / AJ 12310 / JCM 11189 / NBRC 100395)).